Reading from the N-terminus, the 773-residue chain is ATP-dependent permease MDL2, mitochondrial (773 aa).

Residues M1 to S90 constitute a mitochondrion transit peptide. Residues P73 to S84 are compositionally biased toward polar residues. A disordered region spans residues P73–E95. An ABC transmembrane type-1 domain is found at L119 to Q413. Helical transmembrane passes span I123–V143, F170–L192, and V257–F277. An ATP-binding site is contributed by G481 to S488. Positions L493 to D733 constitute an ABC transporter domain. Composition is skewed to basic and acidic residues over residues K706 to D733 and E740 to K762. Residues K706–P773 form a disordered region.

Belongs to the ABC transporter superfamily. ABCB family. Mitochondrial peptide exporter (TC 3.A.1.212) subfamily.

The protein localises to the mitochondrion inner membrane. The chain is ATP-dependent permease MDL2, mitochondrial (MDL2) from Saccharomyces cerevisiae (strain ATCC 204508 / S288c) (Baker's yeast).